A 121-amino-acid chain; its full sequence is uncharacterized protein (121 aa).

The next 3 helical transmembrane spans lie at M12–V32, V35–L55, and V67–D87.

The protein belongs to the sbp family.

Its subcellular location is the cell membrane. This is an uncharacterized protein from Mycobacterium bovis (strain ATCC BAA-935 / AF2122/97).